We begin with the raw amino-acid sequence, 125 residues long: Large ribosomal subunit protein eL22 (125 aa).

Belongs to the eukaryotic ribosomal protein eL22 family. As to quaternary structure, component of the large ribosomal subunit.

The protein localises to the cytoplasm. Functionally, component of the large ribosomal subunit. The ribosome is a large ribonucleoprotein complex responsible for the synthesis of proteins in the cell. The chain is Large ribosomal subunit protein eL22 (rpl22) from Gadus morhua (Atlantic cod).